Here is a 421-residue protein sequence, read N- to C-terminus: Medium-chain specific acyl-CoA dehydrogenase, mitochondrial (421 aa).

The transit peptide at 1–25 (MIALFRRSCGVLRSLSHFDWRSQHT) directs the protein to the mitochondrion. Lys-69 is modified (N6-acetyllysine; alternate). At Lys-69 the chain carries N6-succinyllysine; alternate. Lys-79 carries the N6-acetyllysine modification. 158 to 167 (YCVTEPVAGS) contributes to the FAD binding site. Residue Ser-167 coordinates octanoyl-CoA. The residue at position 179 (Lys-179) is an N6-succinyllysine. Position 191-193 (191-193 (WIT)) interacts with FAD. The residue at position 212 (Lys-212) is an N6-acetyllysine; alternate. Position 212 is an N6-succinyllysine; alternate (Lys-212). Ser-216 is an octanoyl-CoA binding site. Lys-217, Lys-259, and Lys-271 each carry N6-acetyllysine; alternate. 3 positions are modified to N6-succinyllysine; alternate: Lys-217, Lys-259, and Lys-271. Asp-278 contributes to the octanoyl-CoA binding site. N6-acetyllysine is present on Lys-279. Arg-281 provides a ligand contact to octanoyl-CoA. Position 301 is an N6-acetyllysine (Lys-301). FAD-binding positions include 306-308 (RKT) and 316-317 (HQ). Residues Arg-349 and Thr-351 each coordinate octanoyl-CoA. At Thr-351 the chain carries Phosphothreonine. 374 to 378 (QIFGG) lines the FAD pocket. Glu-401 is an octanoyl-CoA binding site. Glu-401 serves as the catalytic Proton acceptor. Residue 402–405 (GTAQ) participates in FAD binding.

It belongs to the acyl-CoA dehydrogenase family. In terms of assembly, homotetramer. Interacts with the heterodimeric electron transfer flavoprotein ETF. Requires FAD as cofactor. Acetylated. Could occur at proximity of the cofactor-binding sites and reduce the catalytic activity. Could be deacetylated by SIRT3.

Its subcellular location is the mitochondrion matrix. The catalysed reaction is a medium-chain 2,3-saturated fatty acyl-CoA + oxidized [electron-transfer flavoprotein] + H(+) = a medium-chain (2E)-enoyl-CoA + reduced [electron-transfer flavoprotein]. The enzyme catalyses pentanoyl-CoA + oxidized [electron-transfer flavoprotein] + H(+) = (2E)-pentenoyl-CoA + reduced [electron-transfer flavoprotein]. It carries out the reaction hexanoyl-CoA + oxidized [electron-transfer flavoprotein] + H(+) = (2E)-hexenoyl-CoA + reduced [electron-transfer flavoprotein]. It catalyses the reaction octanoyl-CoA + oxidized [electron-transfer flavoprotein] + H(+) = (2E)-octenoyl-CoA + reduced [electron-transfer flavoprotein]. The catalysed reaction is decanoyl-CoA + oxidized [electron-transfer flavoprotein] + H(+) = (2E)-decenoyl-CoA + reduced [electron-transfer flavoprotein]. The enzyme catalyses dodecanoyl-CoA + oxidized [electron-transfer flavoprotein] + H(+) = (2E)-dodecenoyl-CoA + reduced [electron-transfer flavoprotein]. It carries out the reaction tetradecanoyl-CoA + oxidized [electron-transfer flavoprotein] + H(+) = (2E)-tetradecenoyl-CoA + reduced [electron-transfer flavoprotein]. It catalyses the reaction oxidized [electron-transfer flavoprotein] + hexadecanoyl-CoA + H(+) = (2E)-hexadecenoyl-CoA + reduced [electron-transfer flavoprotein]. Its pathway is lipid metabolism; mitochondrial fatty acid beta-oxidation. In terms of biological role, medium-chain specific acyl-CoA dehydrogenase is one of the acyl-CoA dehydrogenases that catalyze the first step of mitochondrial fatty acid beta-oxidation, an aerobic process breaking down fatty acids into acetyl-CoA and allowing the production of energy from fats. The first step of fatty acid beta-oxidation consists in the removal of one hydrogen from C-2 and C-3 of the straight-chain fatty acyl-CoA thioester, resulting in the formation of trans-2-enoyl-CoA. Electron transfer flavoprotein (ETF) is the electron acceptor that transfers electrons to the main mitochondrial respiratory chain via ETF-ubiquinone oxidoreductase (ETF dehydrogenase). Among the different mitochondrial acyl-CoA dehydrogenases, medium-chain specific acyl-CoA dehydrogenase acts specifically on acyl-CoAs with saturated 6 to 12 carbons long primary chains. The chain is Medium-chain specific acyl-CoA dehydrogenase, mitochondrial from Bos taurus (Bovine).